Consider the following 299-residue polypeptide: S-methyl-5'-thioadenosine phosphorylase (299 aa).

Phosphate-binding positions include Ser14, 56 to 57, and 89 to 90; these read RH and SA. A substrate-binding site is contributed by Met191. Thr192 contributes to the phosphate binding site. 215-217 is a binding site for substrate; that stretch reads DYD.

Belongs to the PNP/MTAP phosphorylase family. MTAP subfamily. Homohexamer. Dimer of a homotrimer.

It catalyses the reaction S-methyl-5'-thioadenosine + phosphate = 5-(methylsulfanyl)-alpha-D-ribose 1-phosphate + adenine. Its pathway is amino-acid biosynthesis; L-methionine biosynthesis via salvage pathway; S-methyl-5-thio-alpha-D-ribose 1-phosphate from S-methyl-5'-thioadenosine (phosphorylase route): step 1/1. In terms of biological role, catalyzes the reversible phosphorylation of S-methyl-5'-thioadenosine (MTA) to adenine and 5-methylthioribose-1-phosphate. Involved in the breakdown of MTA, a major by-product of polyamine biosynthesis. Responsible for the first step in the methionine salvage pathway after MTA has been generated from S-adenosylmethionine. Has broad substrate specificity with 6-aminopurine nucleosides as preferred substrates. The sequence is that of S-methyl-5'-thioadenosine phosphorylase from Gloeobacter violaceus (strain ATCC 29082 / PCC 7421).